The primary structure comprises 353 residues: Photosystem II protein D1 (353 aa).

Thr2 bears the N-acetylthreonine mark. A Phosphothreonine modification is found at Thr2. A run of 3 helical transmembrane segments spans residues 29–46 (YIGW…TATS), 118–133 (HFLL…EWEL), and 142–156 (WIAV…AATA). His118 contributes to the chlorophyll a binding site. Tyr126 contributes to the pheophytin a binding site. [CaMn4O5] cluster-binding residues include Asp170 and Glu189. A helical transmembrane segment spans residues 197 to 218 (FHMLGVAGVFGGSLFSAMHGSL). His198 is a binding site for chlorophyll a. Residues His215 and 264-265 (SF) contribute to the a quinone site. Residue His215 coordinates Fe cation. Residue His272 participates in Fe cation binding. A helical transmembrane segment spans residues 274–288 (LLAAWPVVGIWFTAL). [CaMn4O5] cluster-binding residues include His332, Glu333, Asp342, and Ala344. A propeptide spanning residues 345–353 (AVEAPSTNG) is cleaved from the precursor.

It belongs to the reaction center PufL/M/PsbA/D family. As to quaternary structure, PSII is composed of 1 copy each of membrane proteins PsbA, PsbB, PsbC, PsbD, PsbE, PsbF, PsbH, PsbI, PsbJ, PsbK, PsbL, PsbM, PsbT, PsbX, PsbY, PsbZ, Psb30/Ycf12, at least 3 peripheral proteins of the oxygen-evolving complex and a large number of cofactors. It forms dimeric complexes. The D1/D2 heterodimer binds P680, chlorophylls that are the primary electron donor of PSII, and subsequent electron acceptors. It shares a non-heme iron and each subunit binds pheophytin, quinone, additional chlorophylls, carotenoids and lipids. D1 provides most of the ligands for the Mn4-Ca-O5 cluster of the oxygen-evolving complex (OEC). There is also a Cl(-1) ion associated with D1 and D2, which is required for oxygen evolution. The PSII complex binds additional chlorophylls, carotenoids and specific lipids. serves as cofactor. Tyr-161 forms a radical intermediate that is referred to as redox-active TyrZ, YZ or Y-Z. In terms of processing, C-terminally processed by CTPA; processing is essential to allow assembly of the oxygen-evolving complex and thus photosynthetic growth.

The protein localises to the plastid. Its subcellular location is the chloroplast thylakoid membrane. The enzyme catalyses 2 a plastoquinone + 4 hnu + 2 H2O = 2 a plastoquinol + O2. Functionally, photosystem II (PSII) is a light-driven water:plastoquinone oxidoreductase that uses light energy to abstract electrons from H(2)O, generating O(2) and a proton gradient subsequently used for ATP formation. It consists of a core antenna complex that captures photons, and an electron transfer chain that converts photonic excitation into a charge separation. The D1/D2 (PsbA/PsbD) reaction center heterodimer binds P680, the primary electron donor of PSII as well as several subsequent electron acceptors. This chain is Photosystem II protein D1, found in Dioscorea elephantipes (Elephant's foot yam).